Here is a 197-residue protein sequence, read N- to C-terminus: ATP-dependent Clp protease proteolytic subunit (197 aa).

Serine 98 (nucleophile) is an active-site residue. The active site involves histidine 123.

Belongs to the peptidase S14 family. In terms of assembly, fourteen ClpP subunits assemble into 2 heptameric rings which stack back to back to give a disk-like structure with a central cavity, resembling the structure of eukaryotic proteasomes. Forms large heterooligomeric complexes consisting of an ATPase component (ClpX, ClpC or ClpE) and a proteolytic component (ClpP).

The protein localises to the cytoplasm. The enzyme catalyses Hydrolysis of proteins to small peptides in the presence of ATP and magnesium. alpha-casein is the usual test substrate. In the absence of ATP, only oligopeptides shorter than five residues are hydrolyzed (such as succinyl-Leu-Tyr-|-NHMec, and Leu-Tyr-Leu-|-Tyr-Trp, in which cleavage of the -Tyr-|-Leu- and -Tyr-|-Trp bonds also occurs).. Its activity is regulated as follows. Low intrinsic peptidase activity is stimulated by ATP-binding subunits ClpC, ClpE and ClpX. Activity is disregulated by acyldepsipeptides (ADEP) antibiotics, which negate the need for ATP-binding subunits for activation and which makes it into an unregulated protease. Each ClpP subunit binds 1 ADEP molecule, which prevents binding of ClpX. ADEP binding causes conformational shifts that open the gated pore of the ring. Protease activity is inhibited by diisopropylfluoro-phosphate. Protease activity is inhibited by bortezomib, an oncology drug originally designed to work on the human proteasome. In terms of biological role, cleaves peptides in various proteins in a process that requires ATP hydrolysis. Has a limited peptidase activity in the absence of ATP-binding subunits ClpC, ClpE or ClpX. Has a chymotrypsin-like activity. Plays a major role in the degradation of misfolded proteins. ClpXP is involved in the complete degradation of the site-2 clipped anti-sigma-W factor RsiW. This results in the release of SigW and the transcriptional activation of genes under the control of the sigma-W factor. Probably the major protease that degrades proteins tagged by trans-translation. The polypeptide is ATP-dependent Clp protease proteolytic subunit (Bacillus subtilis (strain 168)).